Here is a 514-residue protein sequence, read N- to C-terminus: Anthranilate synthase component 1 (514 aa).

L-tryptophan-binding positions include Thr40 and 291–293; that span reads PYM. Chorismate is bound at residue 328–329; it reads GT. Glu361 is a binding site for Mg(2+). Chorismate is bound by residues Tyr449, Arg469, 482-484, and Gly484; that span reads GAG. Residue Glu497 coordinates Mg(2+).

This sequence belongs to the anthranilate synthase component I family. In terms of assembly, heterotetramer consisting of two non-identical subunits: a beta subunit (TrpG) and a large alpha subunit (TrpE). The cofactor is Mg(2+).

The catalysed reaction is chorismate + L-glutamine = anthranilate + pyruvate + L-glutamate + H(+). It functions in the pathway amino-acid biosynthesis; L-tryptophan biosynthesis; L-tryptophan from chorismate: step 1/5. Its activity is regulated as follows. Feedback inhibited by tryptophan. Functionally, part of a heterotetrameric complex that catalyzes the two-step biosynthesis of anthranilate, an intermediate in the biosynthesis of L-tryptophan. In the first step, the glutamine-binding beta subunit (TrpG) of anthranilate synthase (AS) provides the glutamine amidotransferase activity which generates ammonia as a substrate that, along with chorismate, is used in the second step, catalyzed by the large alpha subunit of AS (TrpE) to produce anthranilate. In the absence of TrpG, TrpE can synthesize anthranilate directly from chorismate and high concentrations of ammonia. This chain is Anthranilate synthase component 1 (trpE), found in Buchnera aphidicola subsp. Rhopalosiphum maidis.